Consider the following 341-residue polypeptide: tRNA (cytidine(56)-2'-O)-methyltransferase (341 aa).

S-adenosyl-L-methionine is bound by residues Leu-79 and 104 to 108 (GAEKV). One can recognise an HD domain in the interval 187–294 (IIRHVETVYK…VAHADNLVSM (108 aa)).

The protein belongs to the aTrm56 family. Homodimer.

The protein localises to the cytoplasm. The enzyme catalyses cytidine(56) in tRNA + S-adenosyl-L-methionine = 2'-O-methylcytidine(56) in tRNA + S-adenosyl-L-homocysteine + H(+). In terms of biological role, specifically catalyzes the AdoMet-dependent 2'-O-ribose methylation of cytidine at position 56 in tRNAs. This is tRNA (cytidine(56)-2'-O)-methyltransferase from Picrophilus torridus (strain ATCC 700027 / DSM 9790 / JCM 10055 / NBRC 100828 / KAW 2/3).